The primary structure comprises 552 residues: Glutamine-dependent NAD(+) synthetase (552 aa).

The CN hydrolase domain maps to 11-253 (LRIAMAQFDF…DQWLVVDYAA (243 aa)). The active-site Proton acceptor; for glutaminase activity is the glutamate 52. The For glutaminase activity role is filled by lysine 119. Residue tyrosine 125 coordinates L-glutamine. The Nucleophile; for glutaminase activity role is filled by cysteine 157. The L-glutamine site is built by serine 183 and lysine 189. Residues 275 to 552 (AWRAVVRGLK…YPITNGYSGQ (278 aa)) are ligase. ATP is bound at residue 298–305 (GLSGGIDS). Asparagine 381 serves as a coordination point for deamido-NAD(+). Residue threonine 405 coordinates ATP. Deamido-NAD(+) is bound by residues glutamate 410 and lysine 522.

This sequence in the C-terminal section; belongs to the NAD synthetase family.

The catalysed reaction is deamido-NAD(+) + L-glutamine + ATP + H2O = L-glutamate + AMP + diphosphate + NAD(+) + H(+). Its pathway is cofactor biosynthesis; NAD(+) biosynthesis; NAD(+) from deamido-NAD(+) (L-Gln route): step 1/1. Its function is as follows. Catalyzes the ATP-dependent amidation of deamido-NAD to form NAD. Uses L-glutamine as a nitrogen source. The sequence is that of Glutamine-dependent NAD(+) synthetase from Xanthomonas campestris pv. campestris (strain 8004).